The primary structure comprises 162 residues: MKRVVYPGTFDPITNGHIDLVQRASKLFDSVVIAVAASNRKGPLFTLEERVSLAQKALSHLSNIEVCGFDCLLKDLVEEKQAYGVVRGLRAVSDFEYEFQLANMNRALAPSMESLFLTPAEHLSYISSSLVKEIASLGGDVSKFVPKLVQSALTDKYNELKA.

Thr9 is a binding site for substrate. Residues 9–10 and His17 contribute to the ATP site; that span reads TF. Residues Lys41, Leu73, and Arg87 each coordinate substrate. ATP-binding positions include 88-90, Glu98, and 123-129; these read GLR and LSYISSS.

It belongs to the bacterial CoaD family. As to quaternary structure, homohexamer. Requires Mg(2+) as cofactor.

It localises to the cytoplasm. The enzyme catalyses (R)-4'-phosphopantetheine + ATP + H(+) = 3'-dephospho-CoA + diphosphate. It functions in the pathway cofactor biosynthesis; coenzyme A biosynthesis; CoA from (R)-pantothenate: step 4/5. Functionally, reversibly transfers an adenylyl group from ATP to 4'-phosphopantetheine, yielding dephospho-CoA (dPCoA) and pyrophosphate. This Teredinibacter turnerae (strain ATCC 39867 / T7901) protein is Phosphopantetheine adenylyltransferase.